A 190-amino-acid chain; its full sequence is Segregation and condensation protein B (190 aa).

It belongs to the ScpB family. As to quaternary structure, homodimer. Homodimerization may be required to stabilize the binding of ScpA to the Smc head domains. Component of a cohesin-like complex composed of ScpA, ScpB and the Smc homodimer, in which ScpA and ScpB bind to the head domain of Smc. The presence of the three proteins is required for the association of the complex with DNA.

The protein localises to the cytoplasm. Its function is as follows. Participates in chromosomal partition during cell division. May act via the formation of a condensin-like complex containing Smc and ScpA that pull DNA away from mid-cell into both cell halves. This Bacillus mycoides (strain KBAB4) (Bacillus weihenstephanensis) protein is Segregation and condensation protein B.